The following is a 231-amino-acid chain: Large ribosomal subunit protein uL1 (231 aa).

The protein belongs to the universal ribosomal protein uL1 family. As to quaternary structure, part of the 50S ribosomal subunit.

Binds directly to 23S rRNA. The L1 stalk is quite mobile in the ribosome, and is involved in E site tRNA release. Its function is as follows. Protein L1 is also a translational repressor protein, it controls the translation of the L11 operon by binding to its mRNA. The polypeptide is Large ribosomal subunit protein uL1 (Alcanivorax borkumensis (strain ATCC 700651 / DSM 11573 / NCIMB 13689 / SK2)).